The following is a 179-amino-acid chain: Segregation and condensation protein B (179 aa).

Belongs to the ScpB family. As to quaternary structure, homodimer. Homodimerization may be required to stabilize the binding of ScpA to the Smc head domains. Component of a cohesin-like complex composed of ScpA, ScpB and the Smc homodimer, in which ScpA and ScpB bind to the head domain of Smc. The presence of the three proteins is required for the association of the complex with DNA.

It localises to the cytoplasm. In terms of biological role, participates in chromosomal partition during cell division. May act via the formation of a condensin-like complex containing Smc and ScpA that pull DNA away from mid-cell into both cell halves. The chain is Segregation and condensation protein B from Streptococcus equi subsp. zooepidemicus (strain H70).